An 810-amino-acid polypeptide reads, in one-letter code: Oligoxyloglucan-reducing end-specific xyloglucanase (810 aa).

An N-terminal signal peptide occupies residues 1-28; that stretch reads MRAKNGPGSWLALTAIATSLNTLALAAA. Asn-32 carries N-linked (GlcNAc...) asparagine glycosylation. Asp-66 acts as the Nucleophile in catalysis. The stretch at 126-135 is one BNR 1 repeat; that stretch reads FVSQDRGATF. Asn-188 carries N-linked (GlcNAc...) asparagine glycosylation. The BNR 2 repeat unit spans residues 226–236; sequence YVTRDSGESWE. N-linked (GlcNAc...) asparagine glycosylation is found at Asn-298, Asn-312, and Asn-321. Residues 359–369 form a BNR 3 repeat; that stretch reads YLSHDGGKSWK. The N-linked (GlcNAc...) asparagine glycan is linked to Asn-455. The active-site Proton donor is the Asp-498. A glycan (N-linked (GlcNAc...) asparagine) is linked at Asn-544. Residues 554-564 form a BNR 4 repeat; it reads YSADGGSSWTK. N-linked (GlcNAc...) asparagine glycans are attached at residues Asn-573 and Asn-612. One copy of the BNR 5 repeat lies at 617 to 626; that stretch reads YVTTDLGQTW. N-linked (GlcNAc...) asparagine glycosylation is present at Asn-638. 3 BNR repeats span residues 658–667, 705–716, and 759–769; these read YLSRDGGLSY, YHTRNFGKKWTK, and YRSDDNGKTWV.

This sequence belongs to the glycosyl hydrolase 74 family.

It localises to the secreted. It carries out the reaction Hydrolysis of cellobiose from the reducing end of xyloglucans consisting of a beta-(1-&gt;4)-linked glucan carrying alpha-D-xylosyl groups on O-6 of the glucose residues. To be a substrate, the first residue must be unsubstituted, the second residue may bear a xylosyl group, whether further glycosylated or not, and the third residue, which becomes the new terminus by the action of the enzyme, is preferably xylosylated, but this xylose residue must not be further substituted.. Its function is as follows. Oligoxyloglucan-reducing end-specific xyloglucanase involved in degradation of xyloglucans. Releases the first two glycosyl segments from oligoxyloglucans. Active against cotton xyloglucan, tamarind xyloglucan and tamarind xyloglucan oligomers. This is Oligoxyloglucan-reducing end-specific xyloglucanase (xgcA) from Emericella nidulans (strain FGSC A4 / ATCC 38163 / CBS 112.46 / NRRL 194 / M139) (Aspergillus nidulans).